The sequence spans 222 residues: uncharacterized protein (222 aa).

N-linked (GlcNAc...) asparagine; by host glycosylation is found at asparagine 4, asparagine 75, asparagine 84, asparagine 104, asparagine 170, and asparagine 175. Residues 200–220 (LIIIIGIVIILLLIIVMIKTV) form a helical membrane-spanning segment.

It is found in the membrane. This is an uncharacterized protein from Acanthamoeba polyphaga (Amoeba).